We begin with the raw amino-acid sequence, 203 residues long: Potassium channel Cha6605_3372 (203 aa).

At 1–7 (MVEAPEQ) the chain is on the cytoplasmic side. Residues 8–31 (SETGRIEAFSDGVFAIAITLLVLE) form a helical membrane-spanning segment. Positions 12 to 18 (RIEAFSD) match the RxxxFSD motif motif. Residues 32-52 (IKVPQHKIVETVGLVSSLLSL) are Extracellular-facing. Residues 37–42 (HKIVET) are short helix H1. The interval 44 to 50 (GLVSSLL) is short helix H2. Residues 53 to 78 (WPSYLAFLTSFASILVMWVNHHRIFS) traverse the membrane as a helical segment. The Cytoplasmic segment spans residues 79 to 84 (LVARTD). A helical membrane pass occupies residues 85–110 (HAFFYWNGLLLMLVTFVPFPTALLAE). Residues 111–117 (YLIHPQA) lie on the Extracellular side of the membrane. Residues 118 to 142 (RVAASVYAGIFLAIAIVFNRLWKHA) traverse the membrane as a helical segment. Topologically, residues 143–154 (ATADRLLAQKAD) are cytoplasmic. A helical transmembrane segment spans residues 155–181 (RHEVDAITKQYRFGPGLYLVAFALSFI). The Extracellular portion of the chain corresponds to 182–183 (SV). A helical membrane pass occupies residues 184-199 (WLSVGVCFVLAIYFAL). The Cytoplasmic segment spans residues 200-203 (RSNA).

The protein belongs to the TMEM175 family. Homotetramer.

The protein resides in the membrane. It catalyses the reaction K(+)(in) = K(+)(out). In terms of biological role, potassium channel. The channel is permeable for K(+), Rb(+) and Cs(+), while it is unable to conduct Na(+). The protein is Potassium channel Cha6605_3372 of Chamaesiphon minutus (strain ATCC 27169 / PCC 6605).